The primary structure comprises 176 residues: uncharacterized protein (176 aa).

A compositionally biased stretch (low complexity) spans 87–100; that stretch reads ASASSQLRASRVQS. The tract at residues 87-109 is disordered; sequence ASASSQLRASRVQSGTRQSARAG.

This is an uncharacterized protein from Homo sapiens (Human).